Consider the following 263-residue polypeptide: HTH-type transcriptional repressor NanR (263 aa).

Residues 1–22 (MGLMNAFDSQTEDSSPAIGRNL) are disordered. In terms of domain architecture, HTH gntR-type spans 30 to 98 (KKLSEMVEEE…NGERARVSRP (69 aa)). Positions 58-77 (ERELMAFFNVGRPSVREALA) form a DNA-binding region, H-T-H motif.

It belongs to the NanR family.

Its function is as follows. Transcriptional repressor that controls expression of the genes required for the catabolism of sialic acids. This Escherichia coli (strain 55989 / EAEC) protein is HTH-type transcriptional repressor NanR.